A 729-amino-acid chain; its full sequence is MPKFIEPSIEEIKAEKLYSDMGLTDAEYDKVVDILGREPNFTEVGIFSVMWSEHCSYKHSKPFLKQFPTTSEHVLMGPGEGAGVVDIGDDQAVVFKVESHNHPSAIEPYQGAATGVGGIIRDIVSIGARPINLLNSLRFGELDEIQNRTLTRGVVAGIGGYGNCIGIPTTAGEIEFDERYDGNPLVNAMCVGIIDHDMIQKGTAKGVGNSVIYVGLKTGRDGIHGATFASEELSEESESKRPSVQIGDPFVGKKLMEATLEAITFPELVGIQDMGAAGLTSSSSEMAAKGGSGMHMRLDQVPVREEGISPYEMMLSETQERMLLVVEKGTEQKFLDLFDKHELDSAVIGEVTDTNRFVLTYEDEVYADIPVEPLADEAPVYILEGEEKAHNTSKNDYSNVDVNDVFKKLLAHPTIASKRYLYEQYDQQVGANTVVKPGLQASVVRVEGTNKAIASTIDGEARYVYNQPYEGGKMVVAEAYRNLIAVGATPLAMTDCLNYGSPEKKEIYQQLIDSTKGMAEACEVLKTPVVSGNVSLYNETKGTSIFPTPVVGMVGLIEDIDYLNDFHPHAGDKLYLVGETRNDFGGSQLEKLLYGKVNHESEALDLSEEVEKGEQIKKAIRDGKASHVQTVGKGGLLITLARFSAFYGLGVDAKLDVTDAQLFSESQGRYIVAVKEGQTLDIPNAQEIGTVKDNGQFKVTNGQTTVEENVSTLNEIWEGAIPQCMTSAD.

The active site involves His-54. Tyr-57 and Lys-96 together coordinate ATP. Glu-98 lines the Mg(2+) pocket. Substrate-binding positions include 99 to 102 and Arg-121; that span reads SHNH. His-100 (proton acceptor) is an active-site residue. Asp-122 lines the Mg(2+) pocket. Gln-245 is a binding site for substrate. Asp-273 provides a ligand contact to Mg(2+). 317–319 is a binding site for substrate; that stretch reads ETQ. 2 residues coordinate ATP: Asp-495 and Gly-532. Asn-533 contributes to the Mg(2+) binding site. Ser-535 is a substrate binding site.

The protein belongs to the FGAMS family. Monomer. Part of the FGAM synthase complex composed of 1 PurL, 1 PurQ and 2 PurS subunits.

The protein resides in the cytoplasm. The enzyme catalyses N(2)-formyl-N(1)-(5-phospho-beta-D-ribosyl)glycinamide + L-glutamine + ATP + H2O = 2-formamido-N(1)-(5-O-phospho-beta-D-ribosyl)acetamidine + L-glutamate + ADP + phosphate + H(+). It participates in purine metabolism; IMP biosynthesis via de novo pathway; 5-amino-1-(5-phospho-D-ribosyl)imidazole from N(2)-formyl-N(1)-(5-phospho-D-ribosyl)glycinamide: step 1/2. Functionally, part of the phosphoribosylformylglycinamidine synthase complex involved in the purines biosynthetic pathway. Catalyzes the ATP-dependent conversion of formylglycinamide ribonucleotide (FGAR) and glutamine to yield formylglycinamidine ribonucleotide (FGAM) and glutamate. The FGAM synthase complex is composed of three subunits. PurQ produces an ammonia molecule by converting glutamine to glutamate. PurL transfers the ammonia molecule to FGAR to form FGAM in an ATP-dependent manner. PurS interacts with PurQ and PurL and is thought to assist in the transfer of the ammonia molecule from PurQ to PurL. The polypeptide is Phosphoribosylformylglycinamidine synthase subunit PurL (Staphylococcus carnosus (strain TM300)).